Reading from the N-terminus, the 240-residue chain is Enoyl-CoA delta isomerase 1, peroxisomal (240 aa).

A Microbody targeting signal motif is present at residues 238-240 (SKL).

Belongs to the enoyl-CoA hydratase/isomerase family.

The protein localises to the peroxisome. The enzyme catalyses a (3Z)-enoyl-CoA = a 4-saturated (2E)-enoyl-CoA. The catalysed reaction is a (3E)-enoyl-CoA = a 4-saturated (2E)-enoyl-CoA. It participates in lipid metabolism; fatty acid beta-oxidation. Functionally, able to isomerize both 3-cis and 3-trans double bonds into the 2-trans form in a range of enoyl-CoA species. Essential for the beta oxidation of unsaturated fatty acids. The sequence is that of Enoyl-CoA delta isomerase 1, peroxisomal from Arabidopsis thaliana (Mouse-ear cress).